Consider the following 379-residue polypeptide: cAMP-dependent protein kinase type I-alpha regulatory subunit (379 aa).

Methionine 1 carries the post-translational modification N-acetylmethionine. Residues 1-134 form a dimerization and phosphorylation region; it reads MASSSTSSEE…ALAKAIEKNV (134 aa). The interval 63–93 is disordered; sequence QMVSQQKSSSRSDSREDEVSPPMNPVVKGRR. Residues 94–98 carry the Pseudophosphorylation motif motif; it reads RRGAI. 3',5'-cyclic AMP contacts are provided by residues 135 to 252, glutamate 200, arginine 209, 253 to 379, glutamate 324, and arginine 333; these read LFAH…SKVS and ILES…SLSV.

It belongs to the cAMP-dependent kinase regulatory chain family. As to quaternary structure, the inactive holoenzyme is composed of two regulatory chains and two catalytic chains. Activation by cAMP releases the two active catalytic monomers and the regulatory dimer. Interacts with PRKACA and PRKACB. Interacts with PRRC1; resulting in PKA activation. In terms of processing, the pseudophosphorylation site binds to the substrate-binding region of the catalytic chain, resulting in the inhibition of its activity.

The protein localises to the cell membrane. Its function is as follows. Regulatory subunit of the cAMP-dependent protein kinases involved in cAMP signaling in cells. The polypeptide is cAMP-dependent protein kinase type I-alpha regulatory subunit (prkar1aa) (Danio rerio (Zebrafish)).